Reading from the N-terminus, the 426-residue chain is Glucose-1-phosphate adenylyltransferase (426 aa).

Alpha-D-glucose 1-phosphate-binding positions include Gly-165, 180 to 181 (EK), and Ser-191.

The protein belongs to the bacterial/plant glucose-1-phosphate adenylyltransferase family. Homotetramer.

It carries out the reaction alpha-D-glucose 1-phosphate + ATP + H(+) = ADP-alpha-D-glucose + diphosphate. It functions in the pathway glycan biosynthesis; glycogen biosynthesis. Its function is as follows. Involved in the biosynthesis of ADP-glucose, a building block required for the elongation reactions to produce glycogen. Catalyzes the reaction between ATP and alpha-D-glucose 1-phosphate (G1P) to produce pyrophosphate and ADP-Glc. The polypeptide is Glucose-1-phosphate adenylyltransferase (Ruminiclostridium cellulolyticum (strain ATCC 35319 / DSM 5812 / JCM 6584 / H10) (Clostridium cellulolyticum)).